A 630-amino-acid polypeptide reads, in one-letter code: Vacuolar protein 8 (630 aa).

Gly-2 carries the N-myristoyl glycine lipid modification. ARM repeat units follow at residues 74–115, 117–156, 158–197, 199–238, 242–281, 283–322, 324–364, 408–447, and 456–495; these read EITE…NLAV, AENKLLVVSLGGLEPLIRQMLSPNVEVQCNAVGCITNLAT, DENKTQIAKSGALVPLTRLAKSKDMRVQRNATGALLNMTH, DENRQQLVAAGAIPVLVSLLNSPDTDVQYYCTTALSNIAV, NRKKLAQSEPKLVQSLVQLMDSQSLKVQCQAALALRNLAS, SKYQLEIVKFGGLKPLLRLLHSSYLPLILSAAACVRNVSI, PANE…NLAA, DDLKPQLLEMGICEVLIPLTNSPSVEVQGNSAAALGNLSS, and FNAVWNKPDGGLHAYLVRFLSSADITFQHIAVWTIVQLLE. 2 disordered regions span residues 519 to 558 and 572 to 630; these read AKSPPPSRAGGAPRHDPNDPSAGSSEDEFEDGLTDQEGEG and EVGE…GRDR. Residues 543–558 show a composition bias toward acidic residues; the sequence is SEDEFEDGLTDQEGEG. Residues 598-607 show a composition bias toward polar residues; the sequence is GQGQTSQVGS.

The protein belongs to the beta-catenin family.

It is found in the vacuole membrane. Functions in both vacuole inheritance and protein targeting from the cytoplasm to vacuole. The chain is Vacuolar protein 8 (VAC8) from Cryptococcus neoformans var. neoformans serotype D (strain B-3501A) (Filobasidiella neoformans).